An 88-amino-acid chain; its full sequence is Electron transfer flavoprotein regulatory factor 1 (88 aa).

Belongs to the complex I LYR family. In terms of assembly, homotetramer. Interacts with NDUFAB1. Interacts with ETFA. Interacts with ETFB.

The protein localises to the mitochondrion. Acts as a regulator of the electron transfer flavoprotein by promoting the removal of flavin from the ETF holoenzyme (composed of ETFA and ETFB). The polypeptide is Electron transfer flavoprotein regulatory factor 1 (Bos taurus (Bovine)).